The following is a 522-amino-acid chain: Leucine-rich repeat transmembrane neuronal protein 1 (522 aa).

A signal peptide spans 1-34 (MDFLLLGLCLYWLLRRPSGVVLCLLGACFQMLPA). The region spanning 35–63 (APSGCPQLCRCEGRLLYCEALNLTEAPHN) is the LRRNT domain. Topologically, residues 35–427 (APSGCPQLCR…HAENAVQIHK (393 aa)) are extracellular. Residues N56 and N63 are each glycosylated (N-linked (GlcNAc...) asparagine). LRR repeat units follow at residues 64–87 (LSGL…QFTG), 89–111 (MQLT…AFQK), 112–135 (LRRV…TFRP), 137–159 (PNLR…LFHG), 161–183 (RKLT…IFQD), 184–207 (CRSL…SFAG), 209–231 (FKLT…HFPR), 233–255 (ISLH…LDWV), 256–278 (WNLE…VFET), and 279–302 (VPHL…ILNS). The N-linked (GlcNAc...) asparagine glycan is linked to N130. An LRRCT domain is found at 314 to 365 (NLWDCGRNVCALASWLNNFQGRYDGNLQCASPEYAQGEDVLDAVYAFHLCED). Residue N380 is glycosylated (N-linked (GlcNAc...) asparagine). The segment at 382 to 401 (SDLGPPASSATTLADGGEGQ) is disordered. A helical transmembrane segment spans residues 428 to 448 (VVTGTMALIFSFLIVVLVLYV). Residues 449–522 (SWKCFPASLR…HQQPARECEV (74 aa)) are Cytoplasmic-facing.

Belongs to the LRRTM family. As to expression, predominantly expressed in forebrain regions including thalamus and cerebral cortex.

Its subcellular location is the cell membrane. The protein localises to the postsynaptic cell membrane. Its function is as follows. Exhibits strong synaptogenic activity, restricted to excitatory presynaptic differentiation, acting at both pre- and postsynaptic level. This chain is Leucine-rich repeat transmembrane neuronal protein 1 (LRRTM1), found in Homo sapiens (Human).